The sequence spans 232 residues: Large ribosomal subunit protein uL1 (232 aa).

The protein belongs to the universal ribosomal protein uL1 family. In terms of assembly, part of the 50S ribosomal subunit.

Functionally, binds directly to 23S rRNA. The L1 stalk is quite mobile in the ribosome, and is involved in E site tRNA release. Protein L1 is also a translational repressor protein, it controls the translation of the L11 operon by binding to its mRNA. This Xanthobacter autotrophicus (strain ATCC BAA-1158 / Py2) protein is Large ribosomal subunit protein uL1.